Here is a 526-residue protein sequence, read N- to C-terminus: Beta,beta-carotene 15,15'-dioxygenase (526 aa).

Fe cation is bound by residues His172, His236, His307, and His512.

This sequence belongs to the carotenoid oxygenase family. Fe(2+) is required as a cofactor.

The protein localises to the cytoplasm. It is found in the cytosol. The enzyme catalyses all-trans-beta-carotene + O2 = 2 all-trans-retinal. It functions in the pathway cofactor metabolism; retinol metabolism. In terms of biological role, symmetrically cleaves beta-carotene into two molecules of retinal using a dioxygenase mechanism. The chain is Beta,beta-carotene 15,15'-dioxygenase from Gallus gallus (Chicken).